The sequence spans 247 residues: Probable transcriptional regulatory protein Asuc_1803 (247 aa).

It belongs to the TACO1 family.

Its subcellular location is the cytoplasm. The polypeptide is Probable transcriptional regulatory protein Asuc_1803 (Actinobacillus succinogenes (strain ATCC 55618 / DSM 22257 / CCUG 43843 / 130Z)).